The primary structure comprises 200 residues: Thymidine kinase (200 aa).

ATP contacts are provided by residues 9–16 and 88–91; these read STMNAGKS and DEAH. The active-site Proton acceptor is glutamate 89. 4 residues coordinate Zn(2+): cysteine 146, cysteine 148, cysteine 183, and histidine 186.

This sequence belongs to the thymidine kinase family. As to quaternary structure, homotetramer.

The protein resides in the cytoplasm. It catalyses the reaction thymidine + ATP = dTMP + ADP + H(+). The polypeptide is Thymidine kinase (Rhizobium etli (strain ATCC 51251 / DSM 11541 / JCM 21823 / NBRC 15573 / CFN 42)).